The primary structure comprises 208 residues: ATP-dependent Clp protease proteolytic subunit (208 aa).

The Nucleophile role is filled by serine 105. Histidine 130 is an active-site residue.

Belongs to the peptidase S14 family. Fourteen ClpP subunits assemble into 2 heptameric rings which stack back to back to give a disk-like structure with a central cavity, resembling the structure of eukaryotic proteasomes.

It is found in the cytoplasm. The catalysed reaction is Hydrolysis of proteins to small peptides in the presence of ATP and magnesium. alpha-casein is the usual test substrate. In the absence of ATP, only oligopeptides shorter than five residues are hydrolyzed (such as succinyl-Leu-Tyr-|-NHMec, and Leu-Tyr-Leu-|-Tyr-Trp, in which cleavage of the -Tyr-|-Leu- and -Tyr-|-Trp bonds also occurs).. In terms of biological role, cleaves peptides in various proteins in a process that requires ATP hydrolysis. Has a chymotrypsin-like activity. Plays a major role in the degradation of misfolded proteins. The protein is ATP-dependent Clp protease proteolytic subunit of Xylella fastidiosa (strain M23).